The chain runs to 727 residues: NADH-ubiquinone oxidoreductase 75 kDa subunit, mitochondrial (727 aa).

The transit peptide at 1 to 23 (MLRIPVRKALVGLSKSPKGCVRT) directs the protein to the mitochondrion. The 2Fe-2S ferredoxin-type domain maps to 30-108 (NLIEVFVDGQ…GWNILTNSEK (79 aa)). [2Fe-2S] cluster-binding residues include Cys64, Cys75, and Cys78. Residue Lys84 is modified to N6-acetyllysine. Residue Cys92 coordinates [2Fe-2S] cluster. A 4Fe-4S His(Cys)3-ligated-type domain is found at 108–147 (KSKKAREGVMELLLANHPLDCPICDQGGECDLQDQSMMFG). His124, Cys128, Cys131, Cys137, Cys176, Cys179, Cys182, and Cys226 together coordinate [4Fe-4S] cluster. The 4Fe-4S Mo/W bis-MGD-type domain maps to 245–301 (TRKTESIDVMDAVGSNIVVSTRTGEVMRILPRMHEDINEEWISDKTRFAYDGLKRQR). N6-acetyllysine is present on residues Lys467, Lys499, and Lys709.

It belongs to the complex I 75 kDa subunit family. As to quaternary structure, core subunit of respiratory chain NADH dehydrogenase (Complex I) which is composed of 45 different subunits. This is the largest subunit of complex I and it is a component of the iron-sulfur (IP) fragment of the enzyme. Complex I associates with ubiquinol-cytochrome reductase complex (Complex III) to form supercomplexes. Interacts with MDM2 and AKAP1. [2Fe-2S] cluster serves as cofactor. It depends on [4Fe-4S] cluster as a cofactor.

Its subcellular location is the mitochondrion inner membrane. It catalyses the reaction a ubiquinone + NADH + 5 H(+)(in) = a ubiquinol + NAD(+) + 4 H(+)(out). Functionally, core subunit of the mitochondrial membrane respiratory chain NADH dehydrogenase (Complex I) which catalyzes electron transfer from NADH through the respiratory chain, using ubiquinone as an electron acceptor. Essential for catalysing the entry and efficient transfer of electrons within complex I. Plays a key role in the assembly and stability of complex I and participates in the association of complex I with ubiquinol-cytochrome reductase complex (Complex III) to form supercomplexes. This chain is NADH-ubiquinone oxidoreductase 75 kDa subunit, mitochondrial (NDUFS1), found in Pongo abelii (Sumatran orangutan).